Here is a 182-residue protein sequence, read N- to C-terminus: Large ribosomal subunit protein uL5 (182 aa).

This sequence belongs to the universal ribosomal protein uL5 family. As to quaternary structure, part of the 50S ribosomal subunit; part of the 5S rRNA/L5/L18/L25 subcomplex. Contacts the 5S rRNA and the P site tRNA. Forms a bridge to the 30S subunit in the 70S ribosome.

In terms of biological role, this is one of the proteins that bind and probably mediate the attachment of the 5S RNA into the large ribosomal subunit, where it forms part of the central protuberance. In the 70S ribosome it contacts protein S13 of the 30S subunit (bridge B1b), connecting the 2 subunits; this bridge is implicated in subunit movement. Contacts the P site tRNA; the 5S rRNA and some of its associated proteins might help stabilize positioning of ribosome-bound tRNAs. The sequence is that of Large ribosomal subunit protein uL5 from Borrelia hermsii (strain HS1 / DAH).